A 1675-amino-acid chain; its full sequence is Clathrin heavy chain 1 (1675 aa).

At A2 the chain carries N-acetylalanine. The globular terminal domain stretch occupies residues 2–479; it reads AQILPIRFQE…VDPTLALSVY (478 aa). 7 WD40-like repeat regions span residues 24–67, 68–107, 108–149, 150–195, 196–257, 258–301, and 302–330; these read NIGF…RPIS, ADSAIMNPASKVIALKAGKTLQIFNIEMKSKMKAHTMTDD, VTFW…SSLA, GCQI…QPIE, GHAA…PEAQ, NDFP…ISGE, and TIFVTAPHEATAGIIGVNRKGQVLSVCVE. S67 bears the Phosphoserine mark. T105 is modified (phosphothreonine). Y184 carries the post-translational modification Phosphotyrosine. A Phosphothreonine modification is found at T394. A binding site for the uncoating ATPase, involved in lattice disassembly region spans residues 449-465; that stretch reads EKWLKEDKLECSEELGD. The interval 480–523 is flexible linker; the sequence is LRANVPNKVIQCFAETGQVQKIVLYAKKVGYTPDWIFLLRNVMR. The segment at 524 to 634 is distal segment; sequence ISPDQGQQFA…RALEHFTDLY (111 aa). The segment at 524 to 1675 is heavy chain arm; that stretch reads ISPDQGQQFA…QPQPGFGYSM (1152 aa). 7 CHCR repeats span residues 537–683, 686–828, 833–972, 979–1124, 1128–1269, 1274–1420, and 1423–1566; these read VQDE…QIWV, ASKY…SEDV, ILVV…PLID, LSET…VKEA, YIKA…FRLA, LHIV…LLLN, and LMVL…RECF. The residue at position 634 (Y634) is a Phosphotyrosine. The segment at 639–1675 is proximal segment; sequence AVVHTHLLNP…QPQPGFGYSM (1037 aa). Position 737 is an N6-succinyllysine (K737). The residue at position 856 (K856) is an N6-acetyllysine. Phosphotyrosine is present on Y899. The residue at position 1167 (S1167) is a Phosphoserine. Y1206 bears the Phosphotyrosine mark. The segment at 1213 to 1522 is involved in binding clathrin light chain; the sequence is AAKLLYNNVS…YLFKGNNRWK (310 aa). A Phosphoserine modification is found at S1229. An N6-acetyllysine; alternate modification is found at K1441. K1441 is subject to N6-succinyllysine; alternate. Y1477 and Y1487 each carry phosphotyrosine. The residue at position 1494 (S1494) is a Phosphoserine. K1501 bears the N6-acetyllysine mark. The interval 1550 to 1675 is trimerization; it reads AEELLQWFLQ…QPQPGFGYSM (126 aa).

This sequence belongs to the clathrin heavy chain family. Clathrin triskelions, composed of 3 heavy chains and 3 light chains, are the basic subunits of the clathrin coat. In the presence of light chains, hub assembly is influenced by both the pH and the concentration of calcium. Interacts with HIP1. Interacts with DENND1A, DENND1B and DENND1C. Interacts with OCRL. Interacts with ERBB2. Interacts with FKBP6. Interacts with CKAP5 and TACC3 forming the TACC3/ch-TOG/clathrin complex located at spindle inter-microtubules bridges; the complex implicates clathrin triskelions; TACC3 and CLTC are proposed to form a composite microtubule interaction surface. Interacts with ATG16L1 (via N-terminus). Interacts with RFTN1; the interaction occurs in response to pathogens. Interacts with USP2 isoform 2. Interacts with TMEM106B (via N-terminus). Interacts with DNAJC6; this interaction produces a local change in heavy-chain contacts, creating a detectable global distortion of the clathrin coat and leads to the recruitment of HSPA8.

Its subcellular location is the cytoplasmic vesicle membrane. The protein resides in the membrane. The protein localises to the coated pit. It is found in the melanosome. It localises to the cytoplasm. Its subcellular location is the cytoskeleton. The protein resides in the spindle. Clathrin is the major protein of the polyhedral coat of coated pits and vesicles. Two different adapter protein complexes link the clathrin lattice either to the plasma membrane or to the trans-Golgi network. Acts as a component of the TACC3/ch-TOG/clathrin complex proposed to contribute to stabilization of kinetochore fibers of the mitotic spindle by acting as inter-microtubule bridge. The TACC3/ch-TOG/clathrin complex is required for the maintenance of kinetochore fiber tension. Plays a role in early autophagosome formation. Interaction with DNAJC6 mediates the recruitment of HSPA8 to the clathrin lattice and creates local destabilization of the lattice promoting uncoating. The protein is Clathrin heavy chain 1 of Rattus norvegicus (Rat).